The primary structure comprises 541 residues: Putative apolipoprotein N-acyltransferase (541 aa).

Transmembrane regions (helical) follow at residues P31 to A51, G65 to H85, G89 to F109, A144 to L164, L181 to L201, and L215 to W235. Residues V248–G511 enclose the CN hydrolase domain. E292 (proton acceptor) is an active-site residue. K366 is an active-site residue. Residue C416 is the Nucleophile of the active site.

This sequence belongs to the CN hydrolase family. Apolipoprotein N-acyltransferase subfamily.

It localises to the cell inner membrane. It catalyses the reaction N-terminal S-1,2-diacyl-sn-glyceryl-L-cysteinyl-[lipoprotein] + a glycerophospholipid = N-acyl-S-1,2-diacyl-sn-glyceryl-L-cysteinyl-[lipoprotein] + a 2-acyl-sn-glycero-3-phospholipid + H(+). Its pathway is protein modification; lipoprotein biosynthesis (N-acyl transfer). In terms of biological role, catalyzes the phospholipid dependent N-acylation of the N-terminal cysteine of apolipoprotein, the last step in lipoprotein maturation. This chain is Putative apolipoprotein N-acyltransferase, found in Bordetella parapertussis (strain 12822 / ATCC BAA-587 / NCTC 13253).